Consider the following 88-residue polypeptide: uncharacterized protein (88 aa).

Residues 1-23 (MAVSGLRLTIVWGLLVLILTCQA) form the signal peptide. Residues 25–40 (DKPEGKPDEQPHDSGK) are compositionally biased toward basic and acidic residues. A disordered region spans residues 25–45 (DKPEGKPDEQPHDSGKNSEPA).

It localises to the secreted. This is an uncharacterized protein from Bos taurus (Bovine).